The following is a 208-amino-acid chain: Ribosomal RNA large subunit methyltransferase E (208 aa).

Positions 63, 65, 83, 99, and 124 each coordinate S-adenosyl-L-methionine. Lys164 functions as the Proton acceptor in the catalytic mechanism.

It belongs to the class I-like SAM-binding methyltransferase superfamily. RNA methyltransferase RlmE family.

Its subcellular location is the cytoplasm. The catalysed reaction is uridine(2552) in 23S rRNA + S-adenosyl-L-methionine = 2'-O-methyluridine(2552) in 23S rRNA + S-adenosyl-L-homocysteine + H(+). In terms of biological role, specifically methylates the uridine in position 2552 of 23S rRNA at the 2'-O position of the ribose in the fully assembled 50S ribosomal subunit. This chain is Ribosomal RNA large subunit methyltransferase E, found in Hamiltonella defensa subsp. Acyrthosiphon pisum (strain 5AT).